A 686-amino-acid polypeptide reads, in one-letter code: Acyl-CoA synthetase short-chain family member 3, mitochondrial (686 aa).

A mitochondrion-targeting transit peptide spans 1-29; the sequence is MKPSWLQCRKVTSAGGLGGPLPGSSPARG. 227-230 contacts CoA; that stretch reads EPGR. ATP contacts are provided by residues 425–427 and 446–451; these read GER and DHWWQT. K518 carries the post-translational modification N6-succinyllysine. K524 bears the N6-acetyllysine mark. ATP-binding residues include D539, R554, and R565. R624 contributes to the CoA binding site.

Belongs to the ATP-dependent AMP-binding enzyme family.

The protein resides in the mitochondrion matrix. The catalysed reaction is acetate + ATP + CoA = acetyl-CoA + AMP + diphosphate. It carries out the reaction propanoate + ATP + CoA = propanoyl-CoA + AMP + diphosphate. The enzyme catalyses butanoate + ATP + CoA = butanoyl-CoA + AMP + diphosphate. In terms of biological role, catalyzes the synthesis of acetyl-CoA from short-chain fatty acids. Propionate is the preferred substrate. Can utilize acetate and butyrate with a much lower affinity. This is Acyl-CoA synthetase short-chain family member 3, mitochondrial (ACSS3) from Homo sapiens (Human).